Here is a 396-residue protein sequence, read N- to C-terminus: Enoyl-[acyl-carrier-protein] reductase [NADH] (396 aa).

NAD(+) contacts are provided by residues 48–53, 74–75, 111–112, and 139–140; these read GASTGY, FE, DA, and LA. Tyr-225 contributes to the substrate binding site. The active-site Proton donor is the Tyr-235. NAD(+) contacts are provided by residues Lys-244 and 273–275; that span reads VVT.

This sequence belongs to the TER reductase family. Monomer.

It catalyses the reaction a 2,3-saturated acyl-[ACP] + NAD(+) = a (2E)-enoyl-[ACP] + NADH + H(+). It functions in the pathway lipid metabolism; fatty acid biosynthesis. Its function is as follows. Involved in the final reduction of the elongation cycle of fatty acid synthesis (FAS II). Catalyzes the reduction of a carbon-carbon double bond in an enoyl moiety that is covalently linked to an acyl carrier protein (ACP). The polypeptide is Enoyl-[acyl-carrier-protein] reductase [NADH] (Colwellia psychrerythraea (strain 34H / ATCC BAA-681) (Vibrio psychroerythus)).